Consider the following 161-residue polypeptide: Nucleotide-binding protein Bcenmc03_2579 (161 aa).

Belongs to the YajQ family.

In terms of biological role, nucleotide-binding protein. The polypeptide is Nucleotide-binding protein Bcenmc03_2579 (Burkholderia orbicola (strain MC0-3)).